The primary structure comprises 405 residues: S-adenosylmethionine synthase (405 aa).

His19 contributes to the ATP binding site. Residue Asp21 participates in Mg(2+) binding. Position 47 (Glu47) interacts with K(+). L-methionine is bound by residues Glu60 and Gln103. The interval 103-113 (QSADIAQGVDK) is flexible loop. Residues 179–181 (DGK), 246–247 (RF), Asp255, 261–262 (RK), Ala278, and Lys282 each bind ATP. Asp255 contributes to the L-methionine binding site. Lys286 is a binding site for L-methionine.

The protein belongs to the AdoMet synthase family. As to quaternary structure, homotetramer; dimer of dimers. Requires Mg(2+) as cofactor. K(+) serves as cofactor.

It is found in the cytoplasm. The enzyme catalyses L-methionine + ATP + H2O = S-adenosyl-L-methionine + phosphate + diphosphate. It participates in amino-acid biosynthesis; S-adenosyl-L-methionine biosynthesis; S-adenosyl-L-methionine from L-methionine: step 1/1. In terms of biological role, catalyzes the formation of S-adenosylmethionine (AdoMet) from methionine and ATP. The overall synthetic reaction is composed of two sequential steps, AdoMet formation and the subsequent tripolyphosphate hydrolysis which occurs prior to release of AdoMet from the enzyme. In Shouchella clausii (strain KSM-K16) (Alkalihalobacillus clausii), this protein is S-adenosylmethionine synthase.